A 358-amino-acid polypeptide reads, in one-letter code: DNA replication and repair protein RecF (358 aa).

An ATP-binding site is contributed by G30 to T37.

This sequence belongs to the RecF family.

It localises to the cytoplasm. The RecF protein is involved in DNA metabolism; it is required for DNA replication and normal SOS inducibility. RecF binds preferentially to single-stranded, linear DNA. It also seems to bind ATP. This chain is DNA replication and repair protein RecF, found in Histophilus somni (strain 2336) (Haemophilus somnus).